Consider the following 663-residue polypeptide: DNA ligase (663 aa).

NAD(+)-binding positions include Asp-31–Asp-35, Ser-80–Leu-81, and Glu-110. Catalysis depends on Lys-112, which acts as the N6-AMP-lysine intermediate. Positions 133, 170, 285, and 309 each coordinate NAD(+). The Zn(2+) site is built by Cys-404, Cys-407, Cys-422, and Cys-428. The BRCT domain maps to Phe-585–Glu-663.

Belongs to the NAD-dependent DNA ligase family. LigA subfamily. Mg(2+) is required as a cofactor. It depends on Mn(2+) as a cofactor.

It catalyses the reaction NAD(+) + (deoxyribonucleotide)n-3'-hydroxyl + 5'-phospho-(deoxyribonucleotide)m = (deoxyribonucleotide)n+m + AMP + beta-nicotinamide D-nucleotide.. DNA ligase that catalyzes the formation of phosphodiester linkages between 5'-phosphoryl and 3'-hydroxyl groups in double-stranded DNA using NAD as a coenzyme and as the energy source for the reaction. It is essential for DNA replication and repair of damaged DNA. The sequence is that of DNA ligase from Azobacteroides pseudotrichonymphae genomovar. CFP2.